The primary structure comprises 682 residues: Iron-phytosiderophore transporter yellow stripe 1 (682 aa).

A disordered region spans residues 1-36 (MDLARRGGAAGADDEGEIERHEPAPEDMESDPAAAR). Transmembrane regions (helical) follow at residues 56-76 (GVVA…KIAL), 79-99 (GLVP…LRGW), 124-144 (CAVA…LLGL), 167-187 (GFGW…LSLI), 236-256 (LSFV…CGFV), 288-308 (LVNI…WPLI), 334-354 (FLCI…VFGV), 396-416 (FPAW…AVII), 428-448 (VIVA…GTGL), 460-480 (IALF…AGLA), 514-534 (VAQF…FLLF), 549-569 (APYG…FSVL), 574-594 (LALS…RDVL), 612-632 (FLVG…VFVW), and 640-660 (AVFM…IWTF).

This sequence belongs to the YSL (TC 2.A.67.2) family. Expressed in roots of young maize seedlings. Not detected in leaves of iron-sufficient plants, but accumulates in roots and leaves of iron-deficient plants.

Its subcellular location is the membrane. Its function is as follows. Involved in Fe(3+) uptake. Acts as a proton-coupled symporter for phytosiderophore- and nicotianamine-chelated metals. Capable of transporting either Fe(2+)-nicotianamine or Fe(3+)-phytosiderophore. May transport iron, zinc, nickel, copper and, at a lower rate, manganese and cadmium. This is Iron-phytosiderophore transporter yellow stripe 1 (YS1) from Zea mays (Maize).